A 506-amino-acid polypeptide reads, in one-letter code: Probable E3 ubiquitin-protein ligase ARI14 (506 aa).

Residues 79–308 are TRIAD supradomain; sequence PDSSSEISLE…VDSGFCIKTE (230 aa). The RING-type 1 zinc-finger motif lies at 83–140; sequence SEISLETDVYEFDGDNDLISMPFCSHKFDSKYWREYLEKNFYYVEKIQTTISCPDQDC. The Zn(2+) site is built by cysteine 106, histidine 108, cysteine 135, cysteine 140, cysteine 180, cysteine 185, cysteine 207, cysteine 209, cysteine 214, cysteine 217, histidine 222, cysteine 227, cysteine 258, cysteine 261, cysteine 277, cysteine 279, cysteine 284, cysteine 287, histidine 294, and cysteine 304. Residues 158-227 form an IBR-type zinc finger; it reads EMYERYIWRS…RLESHRPVSC (70 aa). An RING-type 2; atypical zinc finger spans residues 258–287; sequence CPHCLCSLESDTKMPQFLTCVCRLRFCSRC. The RanBP2-type zinc-finger motif lies at 462-492; that stretch reads GTGPFWYCDRCTYANTWEDNECEMCYDDSAS.

It belongs to the RBR family. Ariadne subfamily. It depends on Zn(2+) as a cofactor. Mostly expressed in closed flowers and, to a lower extent, in pollen.

The enzyme catalyses [E2 ubiquitin-conjugating enzyme]-S-ubiquitinyl-L-cysteine + [acceptor protein]-L-lysine = [E2 ubiquitin-conjugating enzyme]-L-cysteine + [acceptor protein]-N(6)-ubiquitinyl-L-lysine.. It functions in the pathway protein modification; protein ubiquitination. Functionally, might act as an E3 ubiquitin-protein ligase, or as part of E3 complex, which accepts ubiquitin from specific E2 ubiquitin-conjugating enzymes and then transfers it to substrates. Negatively regulates male gametophyte formation and double fertilization. The chain is Probable E3 ubiquitin-protein ligase ARI14 from Arabidopsis thaliana (Mouse-ear cress).